Here is a 349-residue protein sequence, read N- to C-terminus: UDP-N-acetylenolpyruvoylglucosamine reductase (349 aa).

The region spanning 26–197 (FDARARVAAR…VAVTFRLPKA (172 aa)) is the FAD-binding PCMH-type domain. Residue arginine 173 is part of the active site. The Proton donor role is filled by serine 249. Residue glutamate 345 is part of the active site.

It belongs to the MurB family. FAD is required as a cofactor.

It is found in the cytoplasm. The catalysed reaction is UDP-N-acetyl-alpha-D-muramate + NADP(+) = UDP-N-acetyl-3-O-(1-carboxyvinyl)-alpha-D-glucosamine + NADPH + H(+). It functions in the pathway cell wall biogenesis; peptidoglycan biosynthesis. Functionally, cell wall formation. The protein is UDP-N-acetylenolpyruvoylglucosamine reductase of Burkholderia pseudomallei (strain K96243).